Consider the following 444-residue polypeptide: Methylenetetrahydrofolate--tRNA-(uracil-5-)-methyltransferase TrmFO (444 aa).

An FAD-binding site is contributed by 10–15 (GAGLAG).

Belongs to the MnmG family. TrmFO subfamily. It depends on FAD as a cofactor.

The protein resides in the cytoplasm. It catalyses the reaction uridine(54) in tRNA + (6R)-5,10-methylene-5,6,7,8-tetrahydrofolate + NADH + H(+) = 5-methyluridine(54) in tRNA + (6S)-5,6,7,8-tetrahydrofolate + NAD(+). The catalysed reaction is uridine(54) in tRNA + (6R)-5,10-methylene-5,6,7,8-tetrahydrofolate + NADPH + H(+) = 5-methyluridine(54) in tRNA + (6S)-5,6,7,8-tetrahydrofolate + NADP(+). Catalyzes the folate-dependent formation of 5-methyl-uridine at position 54 (M-5-U54) in all tRNAs. The chain is Methylenetetrahydrofolate--tRNA-(uracil-5-)-methyltransferase TrmFO from Streptococcus pneumoniae (strain Taiwan19F-14).